Reading from the N-terminus, the 86-residue chain is Envelope glycoprotein N (86 aa).

The N-terminal stretch at 1 to 29 is a signal peptide; sequence MTLYKIVSKPIILLAFFFTRVVFTNEVDG. Residues 30-47 are Virion surface-facing; it reads EELFYKPTCHSDTYEIIL. Residues 48-68 traverse the membrane as a helical segment; sequence KKFSSIWILVNTFILLCSFSL. The Intravirion portion of the chain corresponds to 69–86; sequence FLKYWCFKTLAKETVKGY.

Belongs to the herpesviridae glycoprotein N family. In terms of assembly, interacts (via N-terminus) with gM (via N-terminus). The gM-gN heterodimer forms the gCII complex.

The protein resides in the virion membrane. It localises to the host membrane. Its subcellular location is the host Golgi apparatus. The protein localises to the host trans-Golgi network. Its function is as follows. Envelope glycoprotein necessary for proper maturation of gM and modulation of its membrane fusion activity. Also plays a critical role in virion morphogenesis. The chain is Envelope glycoprotein N from Homo sapiens (Human).